The primary structure comprises 816 residues: Phosphatidylinositol 4-kinase beta (816 aa).

3 disordered regions span residues 1–28, 93–120, and 249–318; these read MGDT…NGGS, PPTG…RRRR, and HRKR…SFSS. Glycine 2 is modified (N-acetylglycine). Positions 2–68 are interaction with ACBD3; the sequence is GDTVVAPAPL…VKLSHGGVAS (67 aa). The region spanning 49 to 242 is the PIK helical domain; sequence QKACQEVLQK…GTKLRRLILS (194 aa). Serine 258 is modified (phosphoserine). Position 263 is a phosphothreonine (threonine 263). Phosphoserine occurs at positions 266, 275, 277, 284, 294, 428, and 511. The span at 278–294 shows a compositional bias: low complexity; it reads DATASISLSSSLKRTAS. A phosphothreonine mark is found at threonine 517 and threonine 519. Residues 535–801 form the PI3K/PI4K catalytic domain; it reads EPWQEKVRRI…MVDGSMRSIT (267 aa). The G-loop stretch occupies residues 541–547; sequence VRRIREG. Residues 668–676 form a catalytic loop region; the sequence is QVKDRHNGN. Residues 687–711 form an activation loop region; the sequence is HIDFGFILSSSPRNLGFETSAFKLT.

This sequence belongs to the PI3/PI4-kinase family. Type III PI4K subfamily. Interacts with ARF1 and ARF3 in the Golgi complex, but not with ARF4, ARF5 or ARF6. Interacts with NCS1/FREQ in a calcium-independent manner. Interacts with CALN1/CABP8 and CALN2/CABP7; in a calcium-dependent manner; this interaction competes with NCS1/FREQ binding. Interacts with ACBD3. Interacts with ARMH3, YWHAB, YWHAE, YWHAG, YWHAH, YWHAQ, YWHAZ and SFN. Interacts with GGA2 (via VHS domain); the interaction is important for PI4KB location at the Golgi apparatus membrane. Interacts with ATG9A. It depends on Mg(2+) as a cofactor. The cofactor is Mn(2+).

The protein localises to the endomembrane system. Its subcellular location is the mitochondrion outer membrane. The protein resides in the rough endoplasmic reticulum membrane. It is found in the golgi apparatus. It localises to the golgi apparatus membrane. It carries out the reaction a 1,2-diacyl-sn-glycero-3-phospho-(1D-myo-inositol) + ATP = a 1,2-diacyl-sn-glycero-3-phospho-(1D-myo-inositol 4-phosphate) + ADP + H(+). Inhibited by wortmannin. Increased kinase activity upon interaction with NCS1/FREQ. In terms of biological role, phosphorylates phosphatidylinositol (PI) in the first committed step in the production of the second messenger inositol-1,4,5,-trisphosphate (PIP). May regulate Golgi disintegration/reorganization during mitosis, possibly via its phosphorylation. Involved in Golgi-to-plasma membrane trafficking. May play an important role in the inner ear development. This Rhinolophus ferrumequinum (Greater horseshoe bat) protein is Phosphatidylinositol 4-kinase beta (PI4KB).